Reading from the N-terminus, the 267-residue chain is MDIVTDKNIGSNFLADSNNRIYILIGDTDNVIDKYLVSILGKIEFYYVYEITVEDSKLINTFVTSNLLCPIKNKFNIKIYHDYKKVIGSCILNVDGKFTRYKDPSKLHVYVFCYRYNNCLNTCTMVKCHELLYPEKEIIVDGYKINDMSFFYTNPEIIKQHTDIKDYETLYKNIFLRRELNRVILGKPSDLIETLKEIVTINSEDIWKVIVSNDIFDSRDVIKLINFDYDREDFLSFVRAWYSNQLNNCKEDNNKIEKVYEIVRNSI.

Belongs to the chordopoxvirinae D3 family.

Its subcellular location is the virion. Its function is as follows. Late protein which is part of a large complex required for early virion morphogenesis. This complex participates in the formation of virosomes and the incorporation of virosomal contents into nascent immature virions. This chain is 27 kDa core protein, found in Canarypox virus (CNPV).